The chain runs to 266 residues: MRKNTYAMRYVAGQPAERILPPGSFASIGQALPPGEPLSTEERIRILVWNIYKQQRAEWLSVLKNYGKDAHLVLLQEAQTTPELVQFATANYLAADQVPAFVLPQHPSGVMTLSAAHPVYCCPLREREPILRLAKSALVTVYPLPDTRLLMVINIHAVNFSLGVDVYSKQLLPIGDQIAHHSGPVIMAGDFNAWSRRRMNALYRFAREMSLRQVRFTDDQRRRAFGRPLDFVFYRGLNVSEASVLVTRASDHNPLLVEFSPGKPDK.

The protein belongs to the UPF0294 family.

Its subcellular location is the cytoplasm. In Shigella dysenteriae serotype 1 (strain Sd197), this protein is UPF0294 protein YafD.